The sequence spans 658 residues: Aminopeptidase P1 (658 aa).

A peptide-binding residues include Arg-69 and His-436. The Mn(2+) site is built by Asp-456, Asp-467, and His-530. Positions 530, 539, and 563 each coordinate a peptide. Mn(2+)-binding residues include Glu-563 and Glu-577.

Belongs to the peptidase M24B family. As to quaternary structure, homodimer. Interacts with N-1-naphthylphthalamic acid (NPA). Interacts with NBCL/BOP2/COCH around the plasma membrane and in the nucleus; this interaction disturbs its regulation of the nuclear transcription factor Y subunit (NF-YA1). Requires Mn(2+) as cofactor. The cofactor is Zn(2+). In terms of tissue distribution, expressed at similar levels in shoot apical meristems (SAM), root meristems (RM), root apical meristems (RAM), roots and leaves and, to a slightly lesser degree, in root nodules.

It localises to the nucleus. It is found in the cytoplasm. The protein resides in the cell membrane. Its subcellular location is the microsome membrane. The enzyme catalyses Release of any N-terminal amino acid, including proline, that is linked to proline, even from a dipeptide or tripeptide.. In terms of biological role, catalyzes the removal of a penultimate prolyl residue from the N-termini of peptides, such as Arg-Pro-Pro. Aminopeptidase that binds to the auxin transport inhibitor N-1-naphthylphthalamic acid (NPA). May play a negative role in the regulation of PIN auxin transport proteins. Involved in the coordination of the symbiotic nodule developmental program; prevents the formation of root nodules by regulating the expression of the nuclear transcription factor Y subunit (NF-YA1), a key nodulin. This chain is Aminopeptidase P1, found in Lotus japonicus (Lotus corniculatus var. japonicus).